The chain runs to 1151 residues: Protein kinase C-like 1 (1151 aa).

2 consecutive REM-1 domains span residues 1–67 (MSFS…KTAQ) and 106–183 (KYDC…INVD). Positions 64-88 (KTAQQSQGENGSEDNERCNSKEYGF) are disordered. Residues 190 to 309 (QPNDIMDNQQ…IRKKKAGQTN (120 aa)) enclose the C2 domain. Serine 226 carries the phosphoserine modification. The disordered stretch occupies residues 306–331 (GQTNEQQGWVNASNINGGSSLASEEG). Phorbol-ester/DAG-type zinc fingers lie at residues 414–461 (GHHF…VTKC) and 481–531 (PHRF…PDFC). Disordered regions lie at residues 546–620 (QDTK…IIDK) and 649–669 (AQQTAEFSSPEKTLDPTSNRR). Residues 560-577 (PSAQLGSSIGTANGSDLS) show a composition bias toward polar residues. Over residues 605–620 (VGRDSPTKQHDPIIDK) the composition is skewed to basic and acidic residues. Serine 761 is subject to Phosphoserine. Positions 782–816 (LAPTSTHASRTTDQQSPQKSQTSTSAKHKKRAAKR) are disordered. A compositionally biased stretch (low complexity) spans 792–806 (TTDQQSPQKSQTSTS). A compositionally biased stretch (basic residues) spans 807-816 (AKHKKRAAKR). In terms of domain architecture, Protein kinase spans 824–1083 (FVLLKVLGKG…ADEVMEEPFF (260 aa)). Residues 830 to 838 (LGKGNFGKV) and lysine 853 each bind ATP. The Proton acceptor role is filled by aspartate 949. Residues 1084 to 1151 (RNINFDDILN…FSFMPDDLDL (68 aa)) form the AGC-kinase C-terminal domain.

Belongs to the protein kinase superfamily. AGC Ser/Thr protein kinase family. PKC subfamily.

The catalysed reaction is L-seryl-[protein] + ATP = O-phospho-L-seryl-[protein] + ADP + H(+). The enzyme catalyses L-threonyl-[protein] + ATP = O-phospho-L-threonyl-[protein] + ADP + H(+). Its function is as follows. Required for cell growth and for the G2-&gt;M transition of the cell division cycle. Mediates a protein kinase cascade; it activates BCK1 which itself activates MKK1/MKK2. This is Protein kinase C-like 1 (PKC1) from Saccharomyces cerevisiae (strain ATCC 204508 / S288c) (Baker's yeast).